Here is a 295-residue protein sequence, read N- to C-terminus: Acetyl-coenzyme A carboxylase carboxyl transferase subunit beta (295 aa).

The tract at residues 1 to 20 (MSWLSKLMPSGIRTENTPAK) is disordered. The CoA carboxyltransferase N-terminal domain occupies 28–295 (LWEKCSNCGS…QPHPQDADAA (268 aa)). Cys32, Cys35, Cys51, and Cys54 together coordinate Zn(2+). Residues 32-54 (CSNCGSALYGPELEENLEVCPKC) form a C4-type zinc finger.

Belongs to the AccD/PCCB family. In terms of assembly, acetyl-CoA carboxylase is a heterohexamer composed of biotin carboxyl carrier protein (AccB), biotin carboxylase (AccC) and two subunits each of ACCase subunit alpha (AccA) and ACCase subunit beta (AccD). Requires Zn(2+) as cofactor.

The protein localises to the cytoplasm. It carries out the reaction N(6)-carboxybiotinyl-L-lysyl-[protein] + acetyl-CoA = N(6)-biotinyl-L-lysyl-[protein] + malonyl-CoA. Its pathway is lipid metabolism; malonyl-CoA biosynthesis; malonyl-CoA from acetyl-CoA: step 1/1. In terms of biological role, component of the acetyl coenzyme A carboxylase (ACC) complex. Biotin carboxylase (BC) catalyzes the carboxylation of biotin on its carrier protein (BCCP) and then the CO(2) group is transferred by the transcarboxylase to acetyl-CoA to form malonyl-CoA. The protein is Acetyl-coenzyme A carboxylase carboxyl transferase subunit beta of Xanthomonas campestris pv. campestris (strain B100).